The primary structure comprises 89 residues: UPF0175 protein ssl1255 (89 aa).

This sequence belongs to the UPF0175 family.

The polypeptide is UPF0175 protein ssl1255 (Synechocystis sp. (strain ATCC 27184 / PCC 6803 / Kazusa)).